The chain runs to 454 residues: Pup--protein ligase (454 aa).

Glutamate 9 contributes to the Mg(2+) binding site. Arginine 53 is an ATP binding site. Position 55 (tyrosine 55) interacts with Mg(2+). The Proton acceptor role is filled by aspartate 57. Glutamate 63 provides a ligand contact to Mg(2+). 2 residues coordinate ATP: threonine 66 and tryptophan 420.

This sequence belongs to the Pup ligase/Pup deamidase family. Pup-conjugating enzyme subfamily.

It carries out the reaction ATP + [prokaryotic ubiquitin-like protein]-L-glutamate + [protein]-L-lysine = ADP + phosphate + N(6)-([prokaryotic ubiquitin-like protein]-gamma-L-glutamyl)-[protein]-L-lysine.. Its pathway is protein degradation; proteasomal Pup-dependent pathway. The protein operates within protein modification; protein pupylation. In terms of biological role, catalyzes the covalent attachment of the prokaryotic ubiquitin-like protein modifier Pup to the proteasomal substrate proteins, thereby targeting them for proteasomal degradation. This tagging system is termed pupylation. The ligation reaction involves the side-chain carboxylate of the C-terminal glutamate of Pup and the side-chain amino group of a substrate lysine. The chain is Pup--protein ligase from Paenarthrobacter aurescens (strain TC1).